The primary structure comprises 266 residues: Zinc transporter ZupT (266 aa).

The next 8 membrane-spanning stretches (helical) occupy residues 8–28 (LLLT…ALAV), 36–56 (LALS…MEII), 71–91 (AGAW…WAID), 123–143 (GIFT…AVFF), 152–172 (GIVI…AVAV), 185–205 (FSLS…GYTL), 209–229 (FLTP…MVYI), and 246–266 (LAIT…LLLT). Fe(2+) is bound by residues asparagine 134 and glutamate 137. Residues glutamate 137 and histidine 162 each coordinate Zn(2+). Asparagine 163, glutamate 166, and glutamate 195 together coordinate Fe(2+). Glutamate 166 is a binding site for Zn(2+).

This sequence belongs to the ZIP transporter (TC 2.A.5) family. ZupT subfamily.

The protein resides in the cell inner membrane. It catalyses the reaction Zn(2+)(in) = Zn(2+)(out). Its function is as follows. Mediates zinc uptake. May also transport other divalent cations. The sequence is that of Zinc transporter ZupT from Chlorobium luteolum (strain DSM 273 / BCRC 81028 / 2530) (Pelodictyon luteolum).